The following is a 483-amino-acid chain: ATP-dependent RNA helicase DDX25 (483 aa).

T49 is modified (phosphothreonine). Positions L61 to S74 match the Nuclear export signal motif. The Q motif motif lies at K97–E125. The Nuclear localization signal motif lies at E100–A114. Residues M130–I300 enclose the Helicase ATP-binding domain. Residue S143–T150 coordinates ATP. The short motif at D247–D250 is the DEAD box element. Residues N311–I478 form the Helicase C-terminal domain.

This sequence belongs to the DEAD box helicase family. Phosphorylated on threonine residues. The phosphorylated form is found in the cytoplasm but not in the nucleus. Isoform 1 is expressed in germ cells. Isoform 2 is highly expressed in Leydig cells and weakly expressed in the pituitary and hypothalamus. Isoform 3 is weakly expressed only in germ cells.

It is found in the cytoplasm. Its subcellular location is the nucleus. The enzyme catalyses ATP + H2O = ADP + phosphate + H(+). ATP-dependent RNA helicase. Required for mRNA export and translation regulation during spermatid development. This Rattus norvegicus (Rat) protein is ATP-dependent RNA helicase DDX25 (Ddx25).